A 171-amino-acid polypeptide reads, in one-letter code: MWNSLKTMWIVFLHMFRRRVTIQYPDEMPNIPPRWRGRIILSRDPDGEERCVACYLCAAACPVDCIALQATEDEHERRYPEFFRINFSRCIFCGFCEEACPTDAIQLTPDFEMGEYNRKNLVYEKEDLLIDGTGKYPGYNFYRVAGVAIGGKNKGGAENEAPPVDPHSLLP.

4Fe-4S ferredoxin-type domains follow at residues 41–71 (LSRD…LQAT) and 81–110 (EFFR…LTPD). [4Fe-4S] cluster is bound by residues C51, C54, C57, C61, C90, C93, C96, and C100.

The protein belongs to the complex I 23 kDa subunit family. NDH-1 is composed of 14 different subunits. Subunits NuoA, H, J, K, L, M, N constitute the membrane sector of the complex. [4Fe-4S] cluster is required as a cofactor.

Its subcellular location is the cell inner membrane. It catalyses the reaction a quinone + NADH + 5 H(+)(in) = a quinol + NAD(+) + 4 H(+)(out). In terms of biological role, NDH-1 shuttles electrons from NADH, via FMN and iron-sulfur (Fe-S) centers, to quinones in the respiratory chain. The immediate electron acceptor for the enzyme in this species is believed to be ubiquinone. Couples the redox reaction to proton translocation (for every two electrons transferred, four hydrogen ions are translocated across the cytoplasmic membrane), and thus conserves the redox energy in a proton gradient. The protein is NADH-quinone oxidoreductase subunit I 1 of Nitrosospira multiformis (strain ATCC 25196 / NCIMB 11849 / C 71).